The chain runs to 429 residues: Serine--tRNA ligase (429 aa).

Threonine 235–glutamate 237 contributes to the L-serine binding site. Residue arginine 266–glutamate 268 coordinates ATP. Glutamate 289 is an L-serine binding site. Glutamate 353–serine 356 is a binding site for ATP. Residue serine 389 coordinates L-serine.

The protein belongs to the class-II aminoacyl-tRNA synthetase family. Type-1 seryl-tRNA synthetase subfamily. As to quaternary structure, homodimer. The tRNA molecule binds across the dimer.

It is found in the cytoplasm. The enzyme catalyses tRNA(Ser) + L-serine + ATP = L-seryl-tRNA(Ser) + AMP + diphosphate + H(+). The catalysed reaction is tRNA(Sec) + L-serine + ATP = L-seryl-tRNA(Sec) + AMP + diphosphate + H(+). The protein operates within aminoacyl-tRNA biosynthesis; selenocysteinyl-tRNA(Sec) biosynthesis; L-seryl-tRNA(Sec) from L-serine and tRNA(Sec): step 1/1. Catalyzes the attachment of serine to tRNA(Ser). Is also able to aminoacylate tRNA(Sec) with serine, to form the misacylated tRNA L-seryl-tRNA(Sec), which will be further converted into selenocysteinyl-tRNA(Sec). The protein is Serine--tRNA ligase of Haemophilus influenzae (strain PittEE).